Here is a 31-residue protein sequence, read N- to C-terminus: Photosystem I reaction center subunit XII (31 aa).

Residues 7 to 26 form a helical membrane-spanning segment; the sequence is QVYIALLTALIPAFFALKLG.

It belongs to the PsaM family.

The protein resides in the plastid. It is found in the chloroplast thylakoid membrane. The chain is Photosystem I reaction center subunit XII from Euglena viridis (Cercaria viridis).